A 502-amino-acid chain; its full sequence is Mannitol 2-dehydrogenase (502 aa).

Position 37–48 (isoleucine 37–alanine 48) interacts with NAD(+).

The protein belongs to the mannitol dehydrogenase family. Monomer.

The catalysed reaction is D-mannitol + NAD(+) = D-fructose + NADH + H(+). Functionally, catalyzes the NAD(H)-dependent interconversion of D-fructose and D-mannitol in the mannitol metabolic pathway. The protein is Mannitol 2-dehydrogenase of Neosartorya fischeri (strain ATCC 1020 / DSM 3700 / CBS 544.65 / FGSC A1164 / JCM 1740 / NRRL 181 / WB 181) (Aspergillus fischerianus).